Here is an 814-residue protein sequence, read N- to C-terminus: MDVADAHVGQLRVRDEVGVRCQKLFLDFLEEFKEDGEIKYLKTVENLVNPDRSTLEVSFEDVENYNQTLATAIIEEYYRIFPYLCQSVSNFVRDRTSLKKSKECYVSFVDVPTRHKVRELSTSKIGTLIRISGQVVRTHPVHPELVLGTFVCLDCQTEIRDVEQQFKFTNPTICRNPVCANRRRFMLEVDKSLFIDFQKVRIQETQAELPRGCIPRSVEVILRAEMVETVQAGDRYDFTGTLIVIPDVGALQLPGAKAEIGSRHKQGDNAAEGVRGLKALGMRDLNYKMAFLACSVQVTSSRFGGTDMPMSEVTSQIMKDQMTPAEWNKVYEMSRDPRLYQNLINSLFPSIYGNDEVKRGILLMLFGGVAKTTQEKTTLRGDINVCIVGDPSTAKSQFLKQVSDFSPRAVYTSGKASSAAGLTAAVVRDEESFDFVIEAGALMLADNGICCIDEFDKMDPHDQVAIHEAMEQQTISIAKAGVRATLNARTSILAAANPIGGRYDRSKSLQQNIQLTAPIMSRFDLFFILVDECNEVVDYAIARKIVDLHSHIEHSLDQVYSREDVLRYIMFARQFKPVIQPEAMALLVENYGHLRQRDTGTTGKSTWRITVRQLESMIRLSEAMAKMECSEEVTERHVKEAYRLLNKSIIRVEQPDIHLDEEEGEENENVMDIGEETPEDTPRTNETEENDQDTPAVAKKKLTLSFEEYKNLSNMLVIHMRNEESRMESEELDREGISKTELINWYLSQVEDQLESVEELMERKVLIEKVIDRLIYHDQVIIPLKQAKLGETDQDDAGDQDVLLVVHPNYIVES.

A C4-type zinc finger spans residues 152–179 (CLDCQTEIRDVEQQFKFTNPTICRNPVC). An MCM domain is found at 339–545 (LYQNLINSLF…VVDYAIARKI (207 aa)). 6 residues coordinate ATP: Ser392, Thr393, Ala394, Lys395, Ser396, and Asn497. Residues 521–524 (SRFD) carry the Arginine finger motif. Residues Arg612 and Glu615 each coordinate ADP. The interval 656 to 696 (DIHLDEEEGEENENVMDIGEETPEDTPRTNETEENDQDTPA) is disordered. Residues 659–679 (LDEEEGEENENVMDIGEETPE) are compositionally biased toward acidic residues.

Belongs to the MCM family. In terms of assembly, component of the Mcm2-7 complex. The complex forms a toroidal hexameric ring with the proposed subunit order Mcm2-Mcm6-Mcm4-Mcm7-Mcm3-Mcm5 (By simililarity). The heterodimers of Mcm4/Mcm6 and Mcm3/Mcm5 interact with Mcm2 and Mcm7.

The protein resides in the nucleus. The catalysed reaction is ATP + H2O = ADP + phosphate + H(+). Acts as a component of the MCM2-7 complex (MCM complex) which is the replicative helicase essential for 'once per cell cycle' DNA replication initiation and elongation in eukaryotic cells. Core component of CDC45-MCM-GINS (CMG) helicase, the molecular machine that unwinds template DNA during replication, and around which the replisome is built. The active ATPase sites in the MCM2-7 ring are formed through the interaction surfaces of two neighboring subunits such that a critical structure of a conserved arginine finger motif is provided in trans relative to the ATP-binding site of the Walker A box of the adjacent subunit. The six ATPase active sites, however, are likely to contribute differentially to the complex helicase activity. This Anopheles gambiae (African malaria mosquito) protein is DNA replication licensing factor Mcm6.